A 332-amino-acid chain; its full sequence is Holliday junction branch migration complex subunit RuvB (332 aa).

The interval 1 to 181 is large ATPase domain (RuvB-L); the sequence is MSRILDNEMM…FGITGHMEYY (181 aa). ATP-binding positions include Leu-20, Arg-21, Gly-62, Lys-65, Thr-66, Thr-67, 128–130, Arg-171, Tyr-181, and Arg-218; that span reads EDF. Thr-66 contributes to the Mg(2+) binding site. Residues 182–252 are small ATPAse domain (RuvB-S); it reads AHADLTEIVE…ITDKALTMLD (71 aa). Positions 255 to 332 are head domain (RuvB-H); that stretch reads HEGLDYVDQK…EHLGYEYSEK (78 aa). The DNA site is built by Arg-291, Arg-310, Arg-312, and Arg-315.

This sequence belongs to the RuvB family. In terms of assembly, homohexamer. Forms an RuvA(8)-RuvB(12)-Holliday junction (HJ) complex. HJ DNA is sandwiched between 2 RuvA tetramers; dsDNA enters through RuvA and exits via RuvB. An RuvB hexamer assembles on each DNA strand where it exits the tetramer. Each RuvB hexamer is contacted by two RuvA subunits (via domain III) on 2 adjacent RuvB subunits; this complex drives branch migration. In the full resolvosome a probable DNA-RuvA(4)-RuvB(12)-RuvC(2) complex forms which resolves the HJ.

The protein resides in the cytoplasm. The catalysed reaction is ATP + H2O = ADP + phosphate + H(+). In terms of biological role, the RuvA-RuvB-RuvC complex processes Holliday junction (HJ) DNA during genetic recombination and DNA repair, while the RuvA-RuvB complex plays an important role in the rescue of blocked DNA replication forks via replication fork reversal (RFR). RuvA specifically binds to HJ cruciform DNA, conferring on it an open structure. The RuvB hexamer acts as an ATP-dependent pump, pulling dsDNA into and through the RuvAB complex. RuvB forms 2 homohexamers on either side of HJ DNA bound by 1 or 2 RuvA tetramers; 4 subunits per hexamer contact DNA at a time. Coordinated motions by a converter formed by DNA-disengaged RuvB subunits stimulates ATP hydrolysis and nucleotide exchange. Immobilization of the converter enables RuvB to convert the ATP-contained energy into a lever motion, pulling 2 nucleotides of DNA out of the RuvA tetramer per ATP hydrolyzed, thus driving DNA branch migration. The RuvB motors rotate together with the DNA substrate, which together with the progressing nucleotide cycle form the mechanistic basis for DNA recombination by continuous HJ branch migration. Branch migration allows RuvC to scan DNA until it finds its consensus sequence, where it cleaves and resolves cruciform DNA. The chain is Holliday junction branch migration complex subunit RuvB from Streptococcus pneumoniae serotype 19F (strain G54).